Here is a 154-residue protein sequence, read N- to C-terminus: uncharacterized protein (154 aa).

This is an uncharacterized protein from Archaeoglobus fulgidus (strain ATCC 49558 / DSM 4304 / JCM 9628 / NBRC 100126 / VC-16).